A 598-amino-acid polypeptide reads, in one-letter code: Polypeptide N-acetylgalactosaminyltransferase 17 (598 aa).

The Cytoplasmic segment spans residues 1–6; it reads MASLRR. Residues 7–27 form a helical; Signal-anchor for type II membrane protein membrane-spanning segment; sequence VKVLLVLNLIAVAGFVLFLAK. Residues 28–598 are Lumenal-facing; it reads CRPIAVRSGD…QRWTIKNSIK (571 aa). The N-linked (GlcNAc...) asparagine glycan is linked to N50. 2 disulfide bridges follow: C142/C373 and C364/C443. Residues 151 to 262 are catalytic subdomain A; the sequence is LPQISIIFIF…AGWAEPVLSR (112 aa). Residues D192 and R223 each contribute to the substrate site. Mn(2+) contacts are provided by D246, H248, and H378. The interval 319–381 is catalytic subdomain B; sequence PIRTPAMIGC…PCSRVAHIER (63 aa). R381 and Y386 together coordinate substrate. N-linked (GlcNAc...) asparagine glycans are attached at residues N461 and N486. The region spanning 465 to 594 is the Ricin B-type lectin domain; that stretch reads AYGELRNNKA…SCTGQRWTIK (130 aa). 3 disulfides stabilise this stretch: C478/C494, C526/C541, and C568/C586.

The protein belongs to the glycosyltransferase 2 family. GalNAc-T subfamily. It depends on Mn(2+) as a cofactor. In terms of tissue distribution, highly expressed in brain and heart. Weakly expressed in kidney, liver, lung and spleen.

It localises to the golgi apparatus membrane. It catalyses the reaction L-seryl-[protein] + UDP-N-acetyl-alpha-D-galactosamine = a 3-O-[N-acetyl-alpha-D-galactosaminyl]-L-seryl-[protein] + UDP + H(+). It carries out the reaction L-threonyl-[protein] + UDP-N-acetyl-alpha-D-galactosamine = a 3-O-[N-acetyl-alpha-D-galactosaminyl]-L-threonyl-[protein] + UDP + H(+). It participates in protein modification; protein glycosylation. Its function is as follows. May catalyze the initial reaction in O-linked oligosaccharide biosynthesis, the transfer of an N-acetyl-D-galactosamine residue to a serine or threonine residue on the protein receptor. In Homo sapiens (Human), this protein is Polypeptide N-acetylgalactosaminyltransferase 17.